The primary structure comprises 547 residues: Hydroxylamine reductase (547 aa).

[4Fe-4S] cluster contacts are provided by cysteine 5, cysteine 8, cysteine 17, and cysteine 23. Histidine 242, glutamate 266, cysteine 310, cysteine 401, cysteine 429, cysteine 454, glutamate 489, and lysine 491 together coordinate hybrid [4Fe-2O-2S] cluster. Cysteine 401 carries the post-translational modification Cysteine persulfide.

The protein belongs to the HCP family. [4Fe-4S] cluster is required as a cofactor. Hybrid [4Fe-2O-2S] cluster serves as cofactor.

The protein resides in the cytoplasm. It carries out the reaction A + NH4(+) + H2O = hydroxylamine + AH2 + H(+). Catalyzes the reduction of hydroxylamine to form NH(3) and H(2)O. In Thermoanaerobacter pseudethanolicus (strain ATCC 33223 / 39E) (Clostridium thermohydrosulfuricum), this protein is Hydroxylamine reductase.